The sequence spans 367 residues: Phosphoribosylaminoimidazole-succinocarboxamide synthase (367 aa).

The protein belongs to the SAICAR synthetase family.

The catalysed reaction is 5-amino-1-(5-phospho-D-ribosyl)imidazole-4-carboxylate + L-aspartate + ATP = (2S)-2-[5-amino-1-(5-phospho-beta-D-ribosyl)imidazole-4-carboxamido]succinate + ADP + phosphate + 2 H(+). The protein operates within purine metabolism; IMP biosynthesis via de novo pathway; 5-amino-1-(5-phospho-D-ribosyl)imidazole-4-carboxamide from 5-amino-1-(5-phospho-D-ribosyl)imidazole-4-carboxylate: step 1/2. This chain is Phosphoribosylaminoimidazole-succinocarboxamide synthase, found in Shewanella pealeana (strain ATCC 700345 / ANG-SQ1).